The primary structure comprises 155 residues: uncharacterized protein (155 aa).

Transmembrane regions (helical) follow at residues 25-45, 50-70, 91-111, and 118-138; these read LPMG…FGWT, IFWF…IMTS, GVKI…ESLF, and WGCT…PILF.

It belongs to the major facilitator superfamily. CAR1 family.

Its subcellular location is the membrane. This is an uncharacterized protein from Schizosaccharomyces pombe (strain 972 / ATCC 24843) (Fission yeast).